The following is a 291-amino-acid chain: Undecaprenyl-diphosphatase (291 aa).

Helical transmembrane passes span 1-21 (MIII…LTEF), 48-68 (SAFT…AWVF), 100-120 (LHVL…DDFI), 124-144 (LFSV…MIIA), 160-180 (INYV…WPGF), 201-221 (SDFT…LSLV), 230-250 (AHIP…LIAI), and 270-290 (IVLV…QGIS).

It belongs to the UppP family.

The protein localises to the cell membrane. The catalysed reaction is di-trans,octa-cis-undecaprenyl diphosphate + H2O = di-trans,octa-cis-undecaprenyl phosphate + phosphate + H(+). Functionally, catalyzes the dephosphorylation of undecaprenyl diphosphate (UPP). Confers resistance to bacitracin. The chain is Undecaprenyl-diphosphatase from Staphylococcus haemolyticus (strain JCSC1435).